A 358-amino-acid polypeptide reads, in one-letter code: tRNA pseudouridine synthase D (358 aa).

Asp-84 serves as the catalytic Nucleophile. In terms of domain architecture, TRUD spans 161-312 (GTPNYFGPQR…RRSLRLMVAD (152 aa)).

The protein belongs to the pseudouridine synthase TruD family.

The catalysed reaction is uridine(13) in tRNA = pseudouridine(13) in tRNA. Its function is as follows. Responsible for synthesis of pseudouridine from uracil-13 in transfer RNAs. The polypeptide is tRNA pseudouridine synthase D (Nitrosococcus oceani (strain ATCC 19707 / BCRC 17464 / JCM 30415 / NCIMB 11848 / C-107)).